The chain runs to 283 residues: Pantothenate synthetase (283 aa).

Position 30–37 (30–37 (MGALHEGH)) interacts with ATP. Histidine 37 (proton donor) is an active-site residue. Glutamine 61 serves as a coordination point for (R)-pantoate. Residue glutamine 61 participates in beta-alanine binding. 150–153 (GRKD) provides a ligand contact to ATP. Glutamine 156 provides a ligand contact to (R)-pantoate. ATP-binding positions include valine 179 and 187 to 190 (MSSR).

Belongs to the pantothenate synthetase family. In terms of assembly, homodimer.

Its subcellular location is the cytoplasm. It carries out the reaction (R)-pantoate + beta-alanine + ATP = (R)-pantothenate + AMP + diphosphate + H(+). It participates in cofactor biosynthesis; (R)-pantothenate biosynthesis; (R)-pantothenate from (R)-pantoate and beta-alanine: step 1/1. Catalyzes the condensation of pantoate with beta-alanine in an ATP-dependent reaction via a pantoyl-adenylate intermediate. In Rhodopirellula baltica (strain DSM 10527 / NCIMB 13988 / SH1), this protein is Pantothenate synthetase.